The chain runs to 778 residues: DEK domain-containing chromatin-associated protein 4 (778 aa).

2 disordered regions span residues methionine 1 to arginine 334 and leucine 475 to glutamate 689. Residues alanine 14–alanine 26 are compositionally biased toward polar residues. 4 stretches are compositionally biased toward basic and acidic residues: residues glutamate 40–aspartate 95, alanine 121–glycine 153, glutamate 165–asparagine 185, and threonine 209–lysine 243. The stretch at lysine 191–arginine 300 forms a coiled coil. Residues aspartate 244 to aspartate 286 show a composition bias toward acidic residues. Basic and acidic residues-rich tracts occupy residues lysine 287 to lysine 296 and glycine 303 to proline 323. Positions aspartate 289–lysine 296 match the Nuclear localization signal 1 motif. Positions proline 489–alanine 496 match the Nuclear localization signal 2 motif. Over residues lysine 491–lysine 502 the composition is skewed to low complexity. Positions aspartate 526–lysine 587 form a coiled coil. Acidic residues-rich tracts occupy residues aspartate 527 to glutamate 553 and serine 560 to glutamate 582. The Nuclear localization signal 3 signature appears at proline 618 to arginine 625. Basic residues predominate over residues alanine 621–lysine 631. Residues lysine 678–glutamate 689 are compositionally biased toward basic and acidic residues. The region spanning glutamate 685–threonine 740 is the DEK-C domain. DNA-binding regions lie at residues aspartate 703 to aspartate 717 and lysine 732 to glutamine 736. A coiled-coil region spans residues lysine 732–lysine 766. Residues lysine 741–alanine 778 form a disordered region. The segment covering glutamate 745–glutamate 763 has biased composition (acidic residues). Over residues lysine 764–alanine 778 the composition is skewed to basic and acidic residues.

In terms of assembly, interacts with DEK3.

It is found in the nucleus. It localises to the nucleolus. In terms of biological role, chromatin-associated protein which contributes to the modulation of chromatin structure (such as super-helical structure of DNA) and function. Binds to chromatin of protein-coding genes throughout the genome to regulate nucleosome occupancy and chromatin accessibility, and to modulate the expression of target genes. The chain is DEK domain-containing chromatin-associated protein 4 from Arabidopsis thaliana (Mouse-ear cress).